Reading from the N-terminus, the 151-residue chain is 3-hydroxyacyl-[acyl-carrier-protein] dehydratase FabZ (151 aa).

His54 is a catalytic residue.

Belongs to the thioester dehydratase family. FabZ subfamily.

Its subcellular location is the cytoplasm. It catalyses the reaction a (3R)-hydroxyacyl-[ACP] = a (2E)-enoyl-[ACP] + H2O. In terms of biological role, involved in unsaturated fatty acids biosynthesis. Catalyzes the dehydration of short chain beta-hydroxyacyl-ACPs and long chain saturated and unsaturated beta-hydroxyacyl-ACPs. This is 3-hydroxyacyl-[acyl-carrier-protein] dehydratase FabZ from Pectobacterium atrosepticum (strain SCRI 1043 / ATCC BAA-672) (Erwinia carotovora subsp. atroseptica).